Reading from the N-terminus, the 252-residue chain is MVSASLDGGLRICVRASAPEVHDKAVAWASFLKAPLNPENPEQYFFHFFVEPEGVYVRDQEKRLLEIDFDKNHLDYERKGHRGKNELIAKALGVAKGARRILDLSVGMGIDSVFLTQLGFSVIGVERSPVLYALLKEAFARTKKDSLKSYELHFADSLQFLKQNKGLLEVDAIYFDPMYPHKKKSALPKQEMVVFRDLVGHDDDASLVLQEALTWPVKRVVVKRPMQAEELLPGVRHSYEGKVVRYDTYVVG.

S-adenosyl-L-methionine contacts are provided by residues 126–127 and Asp-176; that span reads ER.

The protein belongs to the methyltransferase superfamily. RsmJ family.

It is found in the cytoplasm. The catalysed reaction is guanosine(1516) in 16S rRNA + S-adenosyl-L-methionine = N(2)-methylguanosine(1516) in 16S rRNA + S-adenosyl-L-homocysteine + H(+). Specifically methylates the guanosine in position 1516 of 16S rRNA. This is Ribosomal RNA small subunit methyltransferase J from Bdellovibrio bacteriovorus (strain ATCC 15356 / DSM 50701 / NCIMB 9529 / HD100).